The chain runs to 808 residues: Quinoprotein glucose dehydrogenase (808 aa).

Residues 1–33 form the signal peptide; sequence MSTTSRPGLWALITAAVFALCGAILTVGGAWVA. Transmembrane regions (helical) follow at residues 35–54, 59–76, 94–108, and 123–138; these read IGGPLYYVILGLALLATAFL, NPAALYLFAVVVFGTVIW, IVIILGIWLLLPFVS, and GAVGVAVLALFASLFT. The active-site Proton acceptor is the aspartate 470. Positions 514 to 545 are disordered; the sequence is VPAPETPVPQGAAPGDHTSPTQPMSQLTLRPK. The segment covering 531–541 has biased composition (polar residues); the sequence is TSPTQPMSQLT.

It belongs to the bacterial PQQ dehydrogenase family. Requires pyrroloquinoline quinone as cofactor.

It localises to the cell inner membrane. It catalyses the reaction a ubiquinone + D-glucose = D-glucono-1,5-lactone + a ubiquinol. This Gluconobacter oxydans (strain 621H) (Gluconobacter suboxydans) protein is Quinoprotein glucose dehydrogenase (gdh).